Consider the following 267-residue polypeptide: Tetrahydromethanopterin S-methyltransferase subunit C (267 aa).

The next 7 helical transmembrane spans lie at 19–39 (IMAI…FMPA), 40–60 (QFSF…ADAV), 75–95 (IGMI…SVGG), 96–116 (IAGP…IGVL), 131–151 (AMVE…VVIA), 162–182 (YVVA…GILH), and 221–241 (GLMA…WAFM).

It belongs to the MtrC family. The complex is composed of 8 subunits; MtrA, MtrB, MtrC, MtrD, MtrE, MtrF, MtrG and MtrH.

The protein localises to the cell membrane. The enzyme catalyses 5-methyl-5,6,7,8-tetrahydromethanopterin + coenzyme M + 2 Na(+)(in) = 5,6,7,8-tetrahydromethanopterin + methyl-coenzyme M + 2 Na(+)(out). It participates in one-carbon metabolism; methanogenesis from CO(2); methyl-coenzyme M from 5,10-methylene-5,6,7,8-tetrahydromethanopterin: step 2/2. Functionally, part of a complex that catalyzes the formation of methyl-coenzyme M and tetrahydromethanopterin from coenzyme M and methyl-tetrahydromethanopterin. This is an energy-conserving, sodium-ion translocating step. In Methanosarcina acetivorans (strain ATCC 35395 / DSM 2834 / JCM 12185 / C2A), this protein is Tetrahydromethanopterin S-methyltransferase subunit C.